Consider the following 304-residue polypeptide: Transcription factor bHLH94 (304 aa).

Residues 86–107 (VESHPPPQHRRKRRRTRNCKNK) form a disordered region. The span at 92-104 (PQHRRKRRRTRNC) shows a compositional bias: basic residues. The 52-residue stretch at 112 to 163 (NQRMTHIAVERNRRKQMNEYLAVLRSLMPSSYAQRGDQASIVGGAINYVKEL) folds into the bHLH domain.

Homodimer. Expressed constitutively in roots, leaves, stems, and flowers.

It localises to the nucleus. This is Transcription factor bHLH94 (BHLH94) from Arabidopsis thaliana (Mouse-ear cress).